We begin with the raw amino-acid sequence, 100 residues long: Urease subunit gamma (100 aa).

It belongs to the urease gamma subunit family. In terms of assembly, heterotrimer of UreA (gamma), UreB (beta) and UreC (alpha) subunits. Three heterotrimers associate to form the active enzyme.

It localises to the cytoplasm. The catalysed reaction is urea + 2 H2O + H(+) = hydrogencarbonate + 2 NH4(+). It functions in the pathway nitrogen metabolism; urea degradation; CO(2) and NH(3) from urea (urease route): step 1/1. The polypeptide is Urease subunit gamma (Vibrio parahaemolyticus).